A 417-amino-acid chain; its full sequence is Serine hydroxymethyltransferase (417 aa).

(6S)-5,6,7,8-tetrahydrofolate-binding positions include leucine 121 and 125–127 (GHL). At lysine 230 the chain carries N6-(pyridoxal phosphate)lysine. 355–357 (SPF) serves as a coordination point for (6S)-5,6,7,8-tetrahydrofolate.

The protein belongs to the SHMT family. In terms of assembly, homodimer. It depends on pyridoxal 5'-phosphate as a cofactor.

The protein resides in the cytoplasm. It carries out the reaction (6R)-5,10-methylene-5,6,7,8-tetrahydrofolate + glycine + H2O = (6S)-5,6,7,8-tetrahydrofolate + L-serine. Its pathway is one-carbon metabolism; tetrahydrofolate interconversion. It functions in the pathway amino-acid biosynthesis; glycine biosynthesis; glycine from L-serine: step 1/1. Functionally, catalyzes the reversible interconversion of serine and glycine with tetrahydrofolate (THF) serving as the one-carbon carrier. This reaction serves as the major source of one-carbon groups required for the biosynthesis of purines, thymidylate, methionine, and other important biomolecules. Also exhibits THF-independent aldolase activity toward beta-hydroxyamino acids, producing glycine and aldehydes, via a retro-aldol mechanism. This Marinobacter nauticus (strain ATCC 700491 / DSM 11845 / VT8) (Marinobacter aquaeolei) protein is Serine hydroxymethyltransferase.